Here is a 207-residue protein sequence, read N- to C-terminus: Imidazoleglycerol-phosphate dehydratase (207 aa).

This sequence belongs to the imidazoleglycerol-phosphate dehydratase family.

It localises to the cytoplasm. It catalyses the reaction D-erythro-1-(imidazol-4-yl)glycerol 3-phosphate = 3-(imidazol-4-yl)-2-oxopropyl phosphate + H2O. It functions in the pathway amino-acid biosynthesis; L-histidine biosynthesis; L-histidine from 5-phospho-alpha-D-ribose 1-diphosphate: step 6/9. The sequence is that of Imidazoleglycerol-phosphate dehydratase (hisB) from Azospirillum brasilense.